The chain runs to 406 residues: MMQNIKDEAYKTYQNVKDEISSHLPQSAPEPTGPPFKCAIFGCGGINFGTAEGPWNNSQKLELVLGHRLQVVALLSPHKSSHERVLKQKAETEYASSYANTREFYSADEYLEYLDSHPEEKPDAYIIGIPPETHGSTQKGADLELAILKRFPDASLFIEKPISAAPVEDAFAVARRLPSESVISVGYMLRYLKTVQKAKEIIKEKNLKVVSTVAKYNSAYIHNSKKFWWIMSESGGPVVEQGTHFCDLSRYFGGDVEIDSIKVNRVEWDDPSGKLNAMPVDEKTIPPEERIPRFTAASWKYKDGGVGAFTHNITLQGAKYDTCIEVQADGYYLRIVDLYEEPVLYVRSPDSDEEKVYKYPNDDPYYSEFKIFLDAAEGKGDKNLIHSDFLDAVKTYELTKAITEAK.

It to S.pombe SpAC12C2.04.

The protein localises to the cytoplasm. The protein resides in the nucleus. This is an uncharacterized protein from Schizosaccharomyces pombe (strain 972 / ATCC 24843) (Fission yeast).